We begin with the raw amino-acid sequence, 355 residues long: Protein DVR-1 (355 aa).

The N-terminal stretch at 1-15 (MFLVLLRACLLTLSL) is a signal peptide. Residues 16 to 240 (CSPAEDDGLV…PLQCRSRRKR (225 aa)) constitute a propeptide that is removed on maturation. N-linked (GlcNAc...) asparagine glycosylation is found at N108, N179, and N296. 3 disulfides stabilise this stretch: C254–C320, C283–C352, and C287–C354.

This sequence belongs to the TGF-beta family. In terms of assembly, homodimer. In terms of tissue distribution, abundant in ovaries and eggs, and equally distributed among all blastomeres.

The protein resides in the secreted. In terms of biological role, serves to facilitate the differentiation of either mesoderm or endoderm either as a cofactor in an instructive signal or by providing permissive environment. The polypeptide is Protein DVR-1 (dvr1) (Danio rerio (Zebrafish)).